The chain runs to 373 residues: Superinfection exclusion protein (373 aa).

An N-terminal signal peptide occupies residues 1 to 15 (MIVLLILSLACTAFT).

The protein belongs to the serpin family. Orthopoxvirus OPG040 subfamily. In terms of assembly, interacts with A56 protein.

Its subcellular location is the virion membrane. The protein localises to the host cell membrane. Prevents cell to cell fusion via its interaction with A56 protein. The A56-K2 complex associates with components of the entry fusion complex (EFC) presumably to avoid superinfection and syncytium formation. The polypeptide is Superinfection exclusion protein (OPG040) (Homo sapiens (Human)).